Consider the following 698-residue polypeptide: Elongation factor G (698 aa).

The tr-type G domain occupies 6–281; that stretch reads ENIRNIGICA…AVVDYLPSPI (276 aa). GTP-binding positions include 15–22, 79–83, and 133–136; these read AHIDAGKT, DTPGH, and NKMD.

Belongs to the TRAFAC class translation factor GTPase superfamily. Classic translation factor GTPase family. EF-G/EF-2 subfamily.

Its subcellular location is the cytoplasm. Functionally, catalyzes the GTP-dependent ribosomal translocation step during translation elongation. During this step, the ribosome changes from the pre-translocational (PRE) to the post-translocational (POST) state as the newly formed A-site-bound peptidyl-tRNA and P-site-bound deacylated tRNA move to the P and E sites, respectively. Catalyzes the coordinated movement of the two tRNA molecules, the mRNA and conformational changes in the ribosome. This chain is Elongation factor G, found in Rickettsia bellii (strain RML369-C).